The primary structure comprises 1275 residues: O-antigen biosynthesis protein RfbC (1275 aa).

Functionally, involved in O-antigen biosynthesis. The sequence is that of O-antigen biosynthesis protein RfbC (rfbC) from Myxococcus xanthus.